The following is a 96-amino-acid chain: Co-chaperonin GroES (96 aa).

Belongs to the GroES chaperonin family. Heptamer of 7 subunits arranged in a ring. Interacts with the chaperonin GroEL.

It is found in the cytoplasm. Together with the chaperonin GroEL, plays an essential role in assisting protein folding. The GroEL-GroES system forms a nano-cage that allows encapsulation of the non-native substrate proteins and provides a physical environment optimized to promote and accelerate protein folding. GroES binds to the apical surface of the GroEL ring, thereby capping the opening of the GroEL channel. This is Co-chaperonin GroES from Haemophilus influenzae (strain 86-028NP).